We begin with the raw amino-acid sequence, 257 residues long: Regulator of G-protein signaling 7-binding protein (257 aa).

Residues 1–45 (MSSAPNGRKKRPSRSTRSSIFQISKPPLQSGDWERRGSGSESAHK) form a disordered region. The segment covering 32–45 (DWERRGSGSESAHK) has biased composition (basic and acidic residues). The short motif at 242 to 247 (RRRKRR) is the Nuclear localization signal element. Residues cysteine 252 and cysteine 253 are each lipidated (S-palmitoyl cysteine).

Belongs to the RGS7BP/RGS9BP family. As to quaternary structure, interacts with 'R7' family proteins RGS6, RGS7, RGS9 and RGS11. Component of some R7-Gbeta5 complex composed of some R7 protein (RGS6, RGS7, RGS9 or RGS11), Gbeta5 (GNB5) and RGS7BP. Palmitoylated. Undergoes rapid palmitoylation turnover. De novo and turnover palmitoylation are both mediated by ZDHHC2. Palmitoylation regulates the cell membrane and nuclear shuttling and the regulation of GPCR signaling. Upon depalmitoylation, it is targeted from the plasma membrane into the nucleus. GPCR signaling inhibits depalmitoylation and promotes localization to the plasma membrane. Specifically expressed in the central nervous system including the retina but not in other non-neuronal tissues (at protein level).

Its subcellular location is the nucleus. It is found in the cytoplasm. The protein resides in the cell membrane. Functionally, regulator of G protein-coupled receptor (GPCR) signaling. Regulatory subunit of the R7-Gbeta5 complexes that acts by controlling the subcellular location of the R7-Gbeta5 complexes. When palmitoylated, it targets the R7-Gbeta5 complexes to the plasma membrane, leading to inhibit G protein alpha subunits. When it is unpalmitoylated, the R7-Gbeta5 complexes undergo a nuclear/cytoplasmic shuttling. May also act by controlling the proteolytic stability of R7 proteins, probably by protecting them from degradation. This chain is Regulator of G-protein signaling 7-binding protein (Rgs7bp), found in Mus musculus (Mouse).